An 800-amino-acid chain; its full sequence is MRISLKWLSEYVDLPAPEELARRLTAVGFEIEAVERTGAELKGVVAARIAASEPHPNAEKLSVTRVDAGGGEPLQVVCGAKNYRVGDVVPLATVGAELPGGARISKAKLRGVESFGMLCSARELGLSADASGLLILPPGTVPGTPIGEALDLDDVLLEVNVTPNRPDALSHVGIAREVAALLGQKVRLPKPGLVEGGGAAADAVKVRIEAPEKCARYAARVVEGVKIGPSPAWLARRLERCGIRSISNVVDATNYVLLELGHPLHAFDLDEVAGHEIVVRTARPGERITTLDGKDRALEPDDLLIADRDRGSALAGVMGGGDSEISAGTTRVLLESAWFAPSGVRRTSRRHGLKSEASYRFERGADPGMVIPALDRCAALIAGLSGGTVRAGVVDAQARKVASPEVRMRWDRPAQVLGMPVSREDARRILLSLGFEERASDGDAVSFGVPSWRVDVSIEEDLVEEIVRTLGYDAIPETLPGPAVRTPAESAEAQAVARARAALEAAGFSEAVNFSFVAARDLEPLAGGLAADGIALRNPISADLAVMRTSLVPSLLRNAAHNRRQRVEDVRLYEIARAYGPRAAGTPGDAPSHEATEVAGVLLGRRSPVGWAVGGDVADFHDAKAAVQGLLEALGVEAAWAAPGPGWLHPRTSAALRAPGGAALGELGELHPRVAEAFELPRGVLAFRLSLDALLAAARLVPQYRPIPRLPAVLRDVAVVVEDAVTAAAVEALVREEPLVEAVILFDVYKGAPLPAGRKNLALAITYRAPDRTLTDAEADAAHGRIVARLRERVGAELRG.

Residues 38–147 (GAELKGVVAA…PGTVPGTPIG (110 aa)) enclose the tRNA-binding domain. Positions 401 to 477 (VASPEVRMRW…RTLGYDAIPE (77 aa)) constitute a B5 domain. The Mg(2+) site is built by Asp-455, Asp-461, Glu-464, and Glu-465. The region spanning 708–799 (PRLPAVLRDV…LRERVGAELR (92 aa)) is the FDX-ACB domain.

It belongs to the phenylalanyl-tRNA synthetase beta subunit family. Type 1 subfamily. Tetramer of two alpha and two beta subunits. Requires Mg(2+) as cofactor.

It localises to the cytoplasm. The enzyme catalyses tRNA(Phe) + L-phenylalanine + ATP = L-phenylalanyl-tRNA(Phe) + AMP + diphosphate + H(+). This Anaeromyxobacter dehalogenans (strain 2CP-C) protein is Phenylalanine--tRNA ligase beta subunit.